We begin with the raw amino-acid sequence, 135 residues long: Interleukin-5 (135 aa).

A signal peptide spans 1-19; the sequence is MRVLLQLGLLALGAVCVCA. N-linked (GlcNAc...) asparagine glycans are attached at residues Asn-48, Asn-77, and Asn-91.

Belongs to the IL-5 family. In terms of assembly, homodimer; disulfide-linked. Interacts with IL5RA. Interacts with CSF2RB.

Its subcellular location is the secreted. Its function is as follows. Homodimeric cytokine expressed predominantly by T-lymphocytes and NK cells that plays an important role in the survival, differentiation, and chemotaxis of eosinophils. Also acts on activated and resting B-cells to induce immunoglobulin production, growth, and differentiation. Mechanistically, exerts its biological effects through a receptor composed of IL5RA subunit and the cytokine receptor common subunit beta/CSF2RB. Binding to the receptor leads to activation of various kinases including LYN, SYK and JAK2 and thereby propagates signals through the RAS-MAPK and JAK-STAT5 pathways respectively. The polypeptide is Interleukin-5 (IL5) (Cavia porcellus (Guinea pig)).